The following is a 120-amino-acid chain: Ribosome-binding factor A (120 aa).

This sequence belongs to the RbfA family. As to quaternary structure, monomer. Binds 30S ribosomal subunits, but not 50S ribosomal subunits or 70S ribosomes.

It is found in the cytoplasm. Its function is as follows. One of several proteins that assist in the late maturation steps of the functional core of the 30S ribosomal subunit. Associates with free 30S ribosomal subunits (but not with 30S subunits that are part of 70S ribosomes or polysomes). Required for efficient processing of 16S rRNA. May interact with the 5'-terminal helix region of 16S rRNA. In Rickettsia conorii (strain ATCC VR-613 / Malish 7), this protein is Ribosome-binding factor A.